The following is a 96-amino-acid chain: (4S)-4-hydroxy-5-phosphonooxypentane-2,3-dione isomerase (96 aa).

In terms of domain architecture, ABM spans 2-91; sequence HVTLVEINVH…MTGPRKKRLF (90 aa).

The protein belongs to the LsrG family. As to quaternary structure, homodimer.

It is found in the cytoplasm. It catalyses the reaction (2S)-2-hydroxy-3,4-dioxopentyl phosphate = 3-hydroxy-2,4-dioxopentyl phosphate. Involved in the degradation of phospho-AI-2, thereby terminating induction of the lsr operon and closing the AI-2 signaling cycle. Catalyzes the conversion of (4S)-4-hydroxy-5-phosphonooxypentane-2,3-dione (P-DPD) to 3-hydroxy-5-phosphonooxypentane-2,4-dione (P-HPD). In Escherichia coli O9:H4 (strain HS), this protein is (4S)-4-hydroxy-5-phosphonooxypentane-2,3-dione isomerase.